We begin with the raw amino-acid sequence, 591 residues long: Serine/threonine-protein kinase Nek2 (591 aa).

Residues 4–258 (YEVLEQIGKG…AAQLLKHPQL (255 aa)) form the Protein kinase domain. ATP is bound by residues 10-18 (IGKGAFGSA) and lysine 33. Residue aspartate 129 is the Proton acceptor of the active site. Disordered stretches follow at residues 309-331 (LGNE…SSTR), 387-408 (EPPK…TTPN), and 500-534 (RTDG…DTSS). Composition is skewed to polar residues over residues 391 to 408 (TSYN…TTPN) and 504 to 534 (DNGS…DTSS).

It belongs to the protein kinase superfamily. NEK Ser/Thr protein kinase family. NIMA subfamily.

The catalysed reaction is L-seryl-[protein] + ATP = O-phospho-L-seryl-[protein] + ADP + H(+). The enzyme catalyses L-threonyl-[protein] + ATP = O-phospho-L-threonyl-[protein] + ADP + H(+). Functionally, may be involved in plant development processes. This is Serine/threonine-protein kinase Nek2 (NEK2) from Oryza sativa subsp. indica (Rice).